Reading from the N-terminus, the 312-residue chain is Olfactory receptor 6C74 (312 aa).

At 1 to 23 (MRNHTTVANFILLGLTDDPQLQV) the chain is on the extracellular side. Asparagine 3 carries an N-linked (GlcNAc...) asparagine glycan. The chain crosses the membrane as a helical span at residues 24-44 (IIFLLLFFTYMLSITGNLTII). Residues 45-63 (TLTLLDLHLKTPMYFFLRN) lie on the Cytoplasmic side of the membrane. A helical membrane pass occupies residues 64-84 (FSFLEVSFTTVYIPKFLVSMA). Topologically, residues 85–95 (TGDKTISYNDC) are extracellular. Cysteine 95 and cysteine 177 are joined by a disulfide. The helical transmembrane segment at 96–116 (AAQLFFTILLGATEFFLLAAM) threads the bilayer. Residues 117 to 140 (SYERYVAICKPLHYTTIMSSRVCS) lie on the Cytoplasmic side of the membrane. The helical transmembrane segment at 141-161 (LLVFASWMAGFLIIFPPLLMG) threads the bilayer. Residues 162-194 (LQLDFCAANTVDHFFCDVSPILQLSCTDTDIIE) are Extracellular-facing. The chain crosses the membrane as a helical span at residues 195 to 215 (LMMLLSAILTLLVTLVLVILS). Over 216 to 237 (YTNIIRTILKIPSSQQRKKAFS) the chain is Cytoplasmic. The chain crosses the membrane as a helical span at residues 238–258 (TCSSHMVVVSISYGSCIFMYV). Residues 259–269 (KPSAKERVSLN) lie on the Extracellular side of the membrane. The helical transmembrane segment at 270-290 (KGIALLSTSVAPMLNPFIYTL) threads the bilayer. Residues 291-312 (RNKQVKDVFKHTVKKIELFSMK) lie on the Cytoplasmic side of the membrane.

This sequence belongs to the G-protein coupled receptor 1 family.

The protein resides in the cell membrane. Odorant receptor. The polypeptide is Olfactory receptor 6C74 (OR6C74) (Homo sapiens (Human)).